The primary structure comprises 331 residues: Ferrochelatase (331 aa).

Fe cation is bound by residues His187 and Glu286.

It belongs to the ferrochelatase family.

Its subcellular location is the cytoplasm. It carries out the reaction heme b + 2 H(+) = protoporphyrin IX + Fe(2+). It participates in porphyrin-containing compound metabolism; protoheme biosynthesis; protoheme from protoporphyrin-IX: step 1/1. Its function is as follows. Catalyzes the ferrous insertion into protoporphyrin IX. The protein is Ferrochelatase of Legionella pneumophila (strain Lens).